Consider the following 95-residue polypeptide: Selenoprotein K (95 aa).

A helical transmembrane segment spans residues Leu20 to Ile42. The interval Arg48–Arg95 is disordered. Sec93 is a non-standard amino acid (selenocysteine).

Belongs to the selenoprotein K family.

The protein resides in the endoplasmic reticulum membrane. It is found in the cell membrane. In terms of biological role, required for Ca(2+) flux in immune cells and plays a role in T-cell proliferation and in T-cell and neutrophil migration. Involved in endoplasmic reticulum-associated degradation (ERAD) of soluble glycosylated proteins. Required for cell surface expression of CD36 and involved in macrophage uptake of low-density lipoprotein and in foam cell formation. Required for palmitoylation. The sequence is that of Selenoprotein K (selenok) from Xenopus tropicalis (Western clawed frog).